Consider the following 242-residue polypeptide: UPF0309 protein Oant_1457 (242 aa).

One can recognise an SIS domain in the interval alanine 30 to proline 214.

The protein belongs to the UPF0309 family.

The sequence is that of UPF0309 protein Oant_1457 from Brucella anthropi (strain ATCC 49188 / DSM 6882 / CCUG 24695 / JCM 21032 / LMG 3331 / NBRC 15819 / NCTC 12168 / Alc 37) (Ochrobactrum anthropi).